Reading from the N-terminus, the 198-residue chain is dTTP/UTP pyrophosphatase (198 aa).

Catalysis depends on Asp-75, which acts as the Proton acceptor.

This sequence belongs to the Maf family. YhdE subfamily. A divalent metal cation serves as cofactor.

The protein localises to the cytoplasm. The catalysed reaction is dTTP + H2O = dTMP + diphosphate + H(+). The enzyme catalyses UTP + H2O = UMP + diphosphate + H(+). Functionally, nucleoside triphosphate pyrophosphatase that hydrolyzes dTTP and UTP. May have a dual role in cell division arrest and in preventing the incorporation of modified nucleotides into cellular nucleic acids. The chain is dTTP/UTP pyrophosphatase from Wolbachia pipientis wMel.